Reading from the N-terminus, the 117-residue chain is Holo-[acyl-carrier-protein] synthase (117 aa).

2 residues coordinate Mg(2+): aspartate 6 and glutamate 55.

The protein belongs to the P-Pant transferase superfamily. AcpS family. The cofactor is Mg(2+).

The protein localises to the cytoplasm. The catalysed reaction is apo-[ACP] + CoA = holo-[ACP] + adenosine 3',5'-bisphosphate + H(+). Functionally, transfers the 4'-phosphopantetheine moiety from coenzyme A to a Ser of acyl-carrier-protein. The protein is Holo-[acyl-carrier-protein] synthase of Chlorobaculum tepidum (strain ATCC 49652 / DSM 12025 / NBRC 103806 / TLS) (Chlorobium tepidum).